Here is a 332-residue protein sequence, read N- to C-terminus: MSDFAFFALEALIKCIIIIAIFASLAGLATYAERKVLAYFQRRIGPDMVGPFGLIQLVADMIKLFTKEDIIPSNSQKFIFAIAPLISAICAFVSLAAIPMLPEFTLFGKVIQPIVADINVALLFVIGTSGLCFYAVFLGGLASNNKWSILGAARGLVAIISYESVGALALIAIVMLVGSFSLVDINNYQSDGFFSWLIFKQPLAFVLFIIALFIETNRTPLCLTENDAEIVAGYGTEYSGLRWGMFFIGEYASMIAGAILVTLLFLGGFNSFWIIPGWIMMIVKSSFIFFWYFWARAAFPQLRPDQVMKMCYLILIPLAVLNLLITALAVLL.

The next 9 membrane-spanning stretches (helical) occupy residues Phe-4 to Ser-24, Ile-44 to Leu-64, Phe-78 to Ile-98, Val-120 to Gly-140, Val-165 to Ile-185, Phe-194 to Ile-214, Ile-255 to Ile-275, Ile-279 to Phe-299, and Tyr-312 to Leu-332.

Belongs to the complex I subunit 1 family. NDH-1 is composed of 14 different subunits. Subunits NuoA, H, J, K, L, M, N constitute the membrane sector of the complex.

Its subcellular location is the cell inner membrane. The catalysed reaction is a quinone + NADH + 5 H(+)(in) = a quinol + NAD(+) + 4 H(+)(out). In terms of biological role, NDH-1 shuttles electrons from NADH, via FMN and iron-sulfur (Fe-S) centers, to quinones in the respiratory chain. The immediate electron acceptor for the enzyme in this species is believed to be ubiquinone. Couples the redox reaction to proton translocation (for every two electrons transferred, four hydrogen ions are translocated across the cytoplasmic membrane), and thus conserves the redox energy in a proton gradient. This subunit may bind ubiquinone. The protein is NADH-quinone oxidoreductase subunit H of Campylobacter jejuni (strain RM1221).